Reading from the N-terminus, the 162-residue chain is CASP-like protein 1C1 (162 aa).

Over 1-7 (MFSAKAR) the chain is Cytoplasmic. A helical membrane pass occupies residues 8–28 (WIVAVVLRVAAAGAAAVAAVL). The Extracellular portion of the chain corresponds to 29–52 (MAMSHDEVIVYGMEVQAKFRYTPS). A helical transmembrane segment spans residues 53–73 (LVFFVAANAAVSACSLVVLLV). Topologically, residues 74-83 (PSSTSKLAAR) are cytoplasmic. The chain crosses the membrane as a helical span at residues 84–104 (LLLMADVVLGMVLAGAFAAAG). Over 105-135 (AMAELGKNGNSHAGWIAICVQVPLFCDRVRS) the chain is Extracellular. A helical transmembrane segment spans residues 136–156 (ALVAGSATIVLYYLMLMYSIY). Over 157-162 (TLPMFP) the chain is Cytoplasmic.

This sequence belongs to the Casparian strip membrane proteins (CASP) family. In terms of assembly, homodimer and heterodimers.

Its subcellular location is the cell membrane. This is CASP-like protein 1C1 from Oryza sativa subsp. japonica (Rice).